The sequence spans 272 residues: Phosphate import ATP-binding protein PstB 1 (272 aa).

The 242-residue stretch at leucine 26–isoleucine 267 folds into the ABC transporter domain. Glycine 58–serine 65 serves as a coordination point for ATP.

Belongs to the ABC transporter superfamily. Phosphate importer (TC 3.A.1.7) family. The complex is composed of two ATP-binding proteins (PstB), two transmembrane proteins (PstC and PstA) and a solute-binding protein (PstS).

The protein resides in the cell inner membrane. It catalyses the reaction phosphate(out) + ATP + H2O = ADP + 2 phosphate(in) + H(+). In terms of biological role, part of the ABC transporter complex PstSACB involved in phosphate import. Responsible for energy coupling to the transport system. The protein is Phosphate import ATP-binding protein PstB 1 of Shewanella oneidensis (strain ATCC 700550 / JCM 31522 / CIP 106686 / LMG 19005 / NCIMB 14063 / MR-1).